We begin with the raw amino-acid sequence, 89 residues long: Small ribosomal subunit protein uS15 (89 aa).

It belongs to the universal ribosomal protein uS15 family. In terms of assembly, part of the 30S ribosomal subunit. Forms a bridge to the 50S subunit in the 70S ribosome, contacting the 23S rRNA.

One of the primary rRNA binding proteins, it binds directly to 16S rRNA where it helps nucleate assembly of the platform of the 30S subunit by binding and bridging several RNA helices of the 16S rRNA. In terms of biological role, forms an intersubunit bridge (bridge B4) with the 23S rRNA of the 50S subunit in the ribosome. This Prochlorococcus marinus subsp. pastoris (strain CCMP1986 / NIES-2087 / MED4) protein is Small ribosomal subunit protein uS15.